Consider the following 860-residue polypeptide: Leucine--tRNA ligase (860 aa).

The short motif at 42-52 (PYPSGRLHMGH) is the 'HIGH' region element. The 'KMSKS' region motif lies at 619 to 623 (KMSKS). Lys-622 lines the ATP pocket.

This sequence belongs to the class-I aminoacyl-tRNA synthetase family.

It localises to the cytoplasm. The catalysed reaction is tRNA(Leu) + L-leucine + ATP = L-leucyl-tRNA(Leu) + AMP + diphosphate. In Escherichia coli O17:K52:H18 (strain UMN026 / ExPEC), this protein is Leucine--tRNA ligase.